A 91-amino-acid polypeptide reads, in one-letter code: Small ribosomal subunit protein uS19 (91 aa).

The protein belongs to the universal ribosomal protein uS19 family.

Protein S19 forms a complex with S13 that binds strongly to the 16S ribosomal RNA. The chain is Small ribosomal subunit protein uS19 from Methylobacillus flagellatus (strain ATCC 51484 / DSM 6875 / VKM B-1610 / KT).